The sequence spans 138 residues: Cysteine desulfuration protein SufE (138 aa).

Residue Cys51 is the Cysteine persulfide intermediate of the active site.

It belongs to the SufE family. As to quaternary structure, homodimer. Interacts with SufS.

It is found in the cytoplasm. The protein operates within cofactor biosynthesis; iron-sulfur cluster biosynthesis. Functionally, participates in cysteine desulfuration mediated by SufS. Cysteine desulfuration mobilizes sulfur from L-cysteine to yield L-alanine and constitutes an essential step in sulfur metabolism for biosynthesis of a variety of sulfur-containing biomolecules. Functions as a sulfur acceptor for SufS, by mediating the direct transfer of the sulfur atom from the S-sulfanylcysteine of SufS, an intermediate product of cysteine desulfuration process. This Escherichia coli (strain K12 / MC4100 / BW2952) protein is Cysteine desulfuration protein SufE.